The chain runs to 254 residues: Leucyl/phenylalanyl-tRNA--protein transferase (254 aa).

It belongs to the L/F-transferase family.

Its subcellular location is the cytoplasm. The enzyme catalyses N-terminal L-lysyl-[protein] + L-leucyl-tRNA(Leu) = N-terminal L-leucyl-L-lysyl-[protein] + tRNA(Leu) + H(+). It carries out the reaction N-terminal L-arginyl-[protein] + L-leucyl-tRNA(Leu) = N-terminal L-leucyl-L-arginyl-[protein] + tRNA(Leu) + H(+). The catalysed reaction is L-phenylalanyl-tRNA(Phe) + an N-terminal L-alpha-aminoacyl-[protein] = an N-terminal L-phenylalanyl-L-alpha-aminoacyl-[protein] + tRNA(Phe). In terms of biological role, functions in the N-end rule pathway of protein degradation where it conjugates Leu, Phe and, less efficiently, Met from aminoacyl-tRNAs to the N-termini of proteins containing an N-terminal arginine or lysine. The sequence is that of Leucyl/phenylalanyl-tRNA--protein transferase from Bordetella bronchiseptica (strain ATCC BAA-588 / NCTC 13252 / RB50) (Alcaligenes bronchisepticus).